Consider the following 188-residue polypeptide: Acireductone dioxygenase (188 aa).

His97, His99, Glu103, and His141 together coordinate Fe(2+). Ni(2+)-binding residues include His97, His99, Glu103, and His141.

The protein belongs to the acireductone dioxygenase (ARD) family. In terms of assembly, monomer. Requires Fe(2+) as cofactor. Ni(2+) serves as cofactor.

It catalyses the reaction 1,2-dihydroxy-5-(methylsulfanyl)pent-1-en-3-one + O2 = 3-(methylsulfanyl)propanoate + CO + formate + 2 H(+). The enzyme catalyses 1,2-dihydroxy-5-(methylsulfanyl)pent-1-en-3-one + O2 = 4-methylsulfanyl-2-oxobutanoate + formate + 2 H(+). The protein operates within amino-acid biosynthesis; L-methionine biosynthesis via salvage pathway; L-methionine from S-methyl-5-thio-alpha-D-ribose 1-phosphate: step 5/6. Catalyzes 2 different reactions between oxygen and the acireductone 1,2-dihydroxy-3-keto-5-methylthiopentene (DHK-MTPene) depending upon the metal bound in the active site. Fe-containing acireductone dioxygenase (Fe-ARD) produces formate and 2-keto-4-methylthiobutyrate (KMTB), the alpha-ketoacid precursor of methionine in the methionine recycle pathway. Ni-containing acireductone dioxygenase (Ni-ARD) produces methylthiopropionate, carbon monoxide and formate, and does not lie on the methionine recycle pathway. This chain is Acireductone dioxygenase, found in Gluconobacter oxydans (strain 621H) (Gluconobacter suboxydans).